Here is a 349-residue protein sequence, read N- to C-terminus: MDKSKALSAALSQIERQFGKGSVMRLGKNDRSMDIETISSGSLGLDIALGVGGLPKGRIVEIYGPESSGKTTLALHCVAEAQKKGGICAFVDAEHALDPVYARKLGVNVDDLLISQPDHGEQALEIADTLVRSGAIDVLIVDSVAALVPRAELEGEMGDALPGLQARLMSQALRKLTASINKSNTMVIFINQIRMKIGVMYGSPETTTGGNALKFYASVRLDIRRIGQIKERDEVVGNQTRVKVVKNKLAPPFKQVEFDIMYGEGVSKMGEILDLGVKAGIVEKSGAWFSHDSQRLGQGRENAKAFLKANPDMTAKIEAAIRQNSGLIAEQILAGSPESDADGEEPMEE.

64-71 (GPESSGKT) serves as a coordination point for ATP.

It belongs to the RecA family.

The protein resides in the cytoplasm. Can catalyze the hydrolysis of ATP in the presence of single-stranded DNA, the ATP-dependent uptake of single-stranded DNA by duplex DNA, and the ATP-dependent hybridization of homologous single-stranded DNAs. It interacts with LexA causing its activation and leading to its autocatalytic cleavage. In Rhodopseudomonas palustris (strain ATCC BAA-98 / CGA009), this protein is Protein RecA.